A 76-amino-acid chain; its full sequence is Ovarian cancer-related protein 1 (76 aa).

The chain is Ovarian cancer-related protein 1 (OCR1) from Homo sapiens (Human).